We begin with the raw amino-acid sequence, 274 residues long: Large ribosomal subunit protein uL2cz/uL2cy (274 aa).

The disordered stretch occupies residues 224–274 (NPVDHPHGGGEGRAPIGRKKPATPWGYPALGRRSRKRNKYSDNLILRRRSK).

The protein belongs to the universal ribosomal protein uL2 family. In terms of assembly, part of the 50S ribosomal subunit.

Its subcellular location is the plastid. It localises to the chloroplast. This chain is Large ribosomal subunit protein uL2cz/uL2cy (rpl2-A), found in Carica papaya (Papaya).